The following is a 462-amino-acid chain: Probable serine/threonine-protein kinase DDB_G0286841 (462 aa).

The 295-residue stretch at 64–358 (FNFLKVISKG…VDEVKCHPFF (295 aa)) folds into the Protein kinase domain. Residues 70-78 (ISKGGFGKV) and lysine 93 each bind ATP. Residue aspartate 188 is the Proton acceptor of the active site. Positions 359–462 (SEINWKIYED…LFIDFDFPTY (104 aa)) constitute an AGC-kinase C-terminal domain. A compositionally biased stretch (low complexity) spans 414–439 (NIYKNNNNNNNNNNNNNNNNNNNNNN). Residues 414–447 (NIYKNNNNNNNNNNNNNNNNNNNNNNDDNDDENN) are disordered.

This sequence belongs to the protein kinase superfamily. AGC Ser/Thr protein kinase family.

The catalysed reaction is L-seryl-[protein] + ATP = O-phospho-L-seryl-[protein] + ADP + H(+). It carries out the reaction L-threonyl-[protein] + ATP = O-phospho-L-threonyl-[protein] + ADP + H(+). In Dictyostelium discoideum (Social amoeba), this protein is Probable serine/threonine-protein kinase DDB_G0286841.